Consider the following 508-residue polypeptide: Lysine--tRNA ligase (508 aa).

Mg(2+) contacts are provided by Glu-418 and Glu-425.

The protein belongs to the class-II aminoacyl-tRNA synthetase family. As to quaternary structure, homodimer. The cofactor is Mg(2+).

Its subcellular location is the cytoplasm. It catalyses the reaction tRNA(Lys) + L-lysine + ATP = L-lysyl-tRNA(Lys) + AMP + diphosphate. This is Lysine--tRNA ligase from Burkholderia thailandensis (strain ATCC 700388 / DSM 13276 / CCUG 48851 / CIP 106301 / E264).